The sequence spans 435 residues: Methylenetetrahydrofolate--tRNA-(uracil-5-)-methyltransferase TrmFO (435 aa).

9–14 (GAGLAG) contributes to the FAD binding site.

It belongs to the MnmG family. TrmFO subfamily. The cofactor is FAD.

The protein localises to the cytoplasm. It carries out the reaction uridine(54) in tRNA + (6R)-5,10-methylene-5,6,7,8-tetrahydrofolate + NADH + H(+) = 5-methyluridine(54) in tRNA + (6S)-5,6,7,8-tetrahydrofolate + NAD(+). The enzyme catalyses uridine(54) in tRNA + (6R)-5,10-methylene-5,6,7,8-tetrahydrofolate + NADPH + H(+) = 5-methyluridine(54) in tRNA + (6S)-5,6,7,8-tetrahydrofolate + NADP(+). In terms of biological role, catalyzes the folate-dependent formation of 5-methyl-uridine at position 54 (M-5-U54) in all tRNAs. This chain is Methylenetetrahydrofolate--tRNA-(uracil-5-)-methyltransferase TrmFO, found in Staphylococcus aureus (strain MRSA252).